The chain runs to 360 residues: Peptide chain release factor 1 (360 aa).

N5-methylglutamine is present on glutamine 235. Residues 284–313 are disordered; that stretch reads AKRQQAEASTRRNLLGSGDRSDRNRTYNFP.

The protein belongs to the prokaryotic/mitochondrial release factor family. In terms of processing, methylated by PrmC. Methylation increases the termination efficiency of RF1.

It localises to the cytoplasm. Its function is as follows. Peptide chain release factor 1 directs the termination of translation in response to the peptide chain termination codons UAG and UAA. This is Peptide chain release factor 1 from Escherichia coli O127:H6 (strain E2348/69 / EPEC).